The sequence spans 191 residues: Protein phosphatase inhibitor 2 (191 aa).

The segment covering 20 to 31 (ESNKPVRQKITE) has biased composition (basic and acidic residues). Disordered regions lie at residues 20-52 (ESNKPVRQKITEPKTPYHPMMDDDGSLSPRGRA) and 67-191 (RNVL…PELI). Phosphoserine occurs at positions 45 and 47. A compositionally biased stretch (acidic residues) spans 93-109 (SDEEEEEADPMDQDEEG). Basic and acidic residues predominate over residues 114–136 (KNERFNAHRKAHYDEFRKVKELR).

In terms of assembly, interacts with protein phosphatase 1. Interacts with TOPP1, SRK2D/SNRK2.2, SRK2I/SNRK2.3, SRK2E/SNRK2.6, SRK2C/SNRK2.8 and PYL11. In terms of processing, phosphorylated in vivo. In terms of tissue distribution, expressed in roots, cotyledons, leaves, flowers and siliques.

It is found in the nucleus. Its subcellular location is the cytoplasm. Functionally, inhibitor of protein-phosphatase 1 (PP1). Binds to and inhibits PP1 activity. Acts as negative regulator of abscisic acid (ABA) signaling. Enhances the inhibition of SRK2E/SNRK2.6 by TOPP1. May promote the interaction between TOPP1 and the ABA receptor PYL11. This is Protein phosphatase inhibitor 2 from Arabidopsis thaliana (Mouse-ear cress).